We begin with the raw amino-acid sequence, 176 residues long: Peptide methionine sulfoxide reductase MsrA (176 aa).

Residue Cys10 is part of the active site.

Belongs to the MsrA Met sulfoxide reductase family.

The catalysed reaction is L-methionyl-[protein] + [thioredoxin]-disulfide + H2O = L-methionyl-(S)-S-oxide-[protein] + [thioredoxin]-dithiol. It carries out the reaction [thioredoxin]-disulfide + L-methionine + H2O = L-methionine (S)-S-oxide + [thioredoxin]-dithiol. Its function is as follows. Has an important function as a repair enzyme for proteins that have been inactivated by oxidation. Catalyzes the reversible oxidation-reduction of methionine sulfoxide in proteins to methionine. The chain is Peptide methionine sulfoxide reductase MsrA from Chromobacterium violaceum (strain ATCC 12472 / DSM 30191 / JCM 1249 / CCUG 213 / NBRC 12614 / NCIMB 9131 / NCTC 9757 / MK).